The following is a 189-amino-acid chain: Peptidyl-tRNA hydrolase (189 aa).

Tyr-16 is a binding site for tRNA. His-21 acts as the Proton acceptor in catalysis. Residues Phe-67, Asn-69, and Asn-115 each contribute to the tRNA site.

This sequence belongs to the PTH family. In terms of assembly, monomer.

The protein localises to the cytoplasm. The catalysed reaction is an N-acyl-L-alpha-aminoacyl-tRNA + H2O = an N-acyl-L-amino acid + a tRNA + H(+). Functionally, hydrolyzes ribosome-free peptidyl-tRNAs (with 1 or more amino acids incorporated), which drop off the ribosome during protein synthesis, or as a result of ribosome stalling. In terms of biological role, catalyzes the release of premature peptidyl moieties from peptidyl-tRNA molecules trapped in stalled 50S ribosomal subunits, and thus maintains levels of free tRNAs and 50S ribosomes. This is Peptidyl-tRNA hydrolase from Legionella pneumophila (strain Corby).